The chain runs to 473 residues: Keratin, type I cytoskeletal 16 (473 aa).

The segment at 1-116 (MTTCSRQFTS…AGGDGLLVGS (116 aa)) is head. The interval 117–152 (EKVTMQNLNDRLASYLDKVRALEEANADLEVKIRDW) is coil 1A. Positions 117–428 (EKVTMQNLND…RLLEGEDAHL (312 aa)) constitute an IF rod domain. Residues 153-170 (YQRQRPSEIKDYSPYFKT) are linker 1. The coil 1B stretch occupies residues 171–262 (IEDLRNKIIA…KNHEEEMLAL (92 aa)). The interval 263 to 285 (RGQTGGDVNVEMDAAPGVDLSRI) is linker 12. The interval 286-424 (LNEMRDQYEQ…ATYRRLLEGE (139 aa)) is coil 2. The tail stretch occupies residues 425–473 (DAHLSSQQASGQSYSSREVFTSSSSSSSRQTRPILKEQSSSSFSQGQSS). The disordered stretch occupies residues 428–473 (LSSQQASGQSYSSREVFTSSSSSSSRQTRPILKEQSSSSFSQGQSS). Low complexity-rich tracts occupy residues 429–452 (SSQQ…SSSS) and 462–473 (QSSSSFSQGQSS).

This sequence belongs to the intermediate filament family. Heterodimer of a type I and a type II keratin. KRT16 associates with KRT6 isomers (KRT6A or KRT6B). Interacts with TCHP. Interacts with TRADD. Expressed in the corneal epithelium (at protein level).

Its function is as follows. Epidermis-specific type I keratin that plays a key role in skin. Acts as a regulator of innate immunity in response to skin barrier breach: required for some inflammatory checkpoint for the skin barrier maintenance. The polypeptide is Keratin, type I cytoskeletal 16 (KRT16) (Homo sapiens (Human)).